Consider the following 786-residue polypeptide: Exo-beta-D-glucosaminidase (786 aa).

Substrate contacts are provided by residues Tyr-53, 102–103 (GE), 178–179 (DE), Glu-306, Glu-347, and Tyr-379. The active-site Proton donor is the Glu-179. The Nucleophile role is filled by Glu-347.

This sequence belongs to the glycosyl hydrolase 35 family. As to quaternary structure, homodimer.

The protein localises to the cytoplasm. The enzyme catalyses beta-D-glucosaminyl-(1-&gt;4)-N-acetyl-D-glucosamine + H2O = D-glucosamine + N-acetyl-D-glucosamine. It functions in the pathway glycan degradation; chitin degradation. In terms of biological role, exo-type enzyme that specifically cleaves the non-reducing terminal glycosidic bond of chitooligosaccharides. Catalyzes the hydrolysis of GlcN-GlcNAc to glucosamine (GlcN) and N-acetylglucosamine (GlcNAc). Involved in chitin degradation. Can also hydrolyze reduced chitobiose (GlcN2OH) and chitooligosaccharides of various chain lengths. This chain is Exo-beta-D-glucosaminidase, found in Thermococcus kodakarensis (strain ATCC BAA-918 / JCM 12380 / KOD1) (Pyrococcus kodakaraensis (strain KOD1)).